A 427-amino-acid chain; its full sequence is MTTLSPYDNLSPVAQTAYRARAAAADIAPLPRAAKDDALLAIADALEVRTSEIVEANAEDVERAREAGTSEGIIDRLTLTPERIRAIAADVRDVAALPDPVGEVVRGSTLPNGIDLRQVRVPLGVVGIIYEARPNVTVDAAALCLKSGNAVLLRGSSSAYASNTALVRVLRDAVGGSGLPADAVQLVPGESRDSVRELMRARGLVDVLIPRGGASLIRTVVEESTVPVIETGTGNCHVYVDAQTDLAMAVDILINSKAQRPSVCNAAETLLVHKDVADAFLPLALDALADAGVTVHGDEHVLARAEGSKATVVPATTEDWETEYLSYDIAAAVVDSLDAAVAHIRLWSSGHTEAIVTTSQAAARRFTQLVDSTTVAVNASTRFTDGGQFGFGAEIGISTQKLHARGPMGLPELTSTKYIVTGDGHTR.

It belongs to the gamma-glutamyl phosphate reductase family.

It is found in the cytoplasm. It carries out the reaction L-glutamate 5-semialdehyde + phosphate + NADP(+) = L-glutamyl 5-phosphate + NADPH + H(+). Its pathway is amino-acid biosynthesis; L-proline biosynthesis; L-glutamate 5-semialdehyde from L-glutamate: step 2/2. Catalyzes the NADPH-dependent reduction of L-glutamate 5-phosphate into L-glutamate 5-semialdehyde and phosphate. The product spontaneously undergoes cyclization to form 1-pyrroline-5-carboxylate. The sequence is that of Gamma-glutamyl phosphate reductase from Streptomyces griseus subsp. griseus (strain JCM 4626 / CBS 651.72 / NBRC 13350 / KCC S-0626 / ISP 5235).